Consider the following 366-residue polypeptide: Carbamoyl phosphate synthase small chain (366 aa).

A CPSase region spans residues 1–171 (MLEKRYLVLE…KTPYVSTGSD (171 aa)). Residues Ser-47, Gly-221, and Gly-223 each coordinate L-glutamine. The 188-residue stretch at 173–360 (SVVLLDFGKK…ITMMKDFKEK (188 aa)) folds into the Glutamine amidotransferase type-1 domain. The active-site Nucleophile is the Cys-248. Positions 249, 252, 290, 292, and 293 each coordinate L-glutamine. Catalysis depends on residues His-333 and Glu-335.

It belongs to the CarA family. As to quaternary structure, composed of two chains; the small (or glutamine) chain promotes the hydrolysis of glutamine to ammonia, which is used by the large (or ammonia) chain to synthesize carbamoyl phosphate. Tetramer of heterodimers (alpha,beta)4.

The catalysed reaction is hydrogencarbonate + L-glutamine + 2 ATP + H2O = carbamoyl phosphate + L-glutamate + 2 ADP + phosphate + 2 H(+). It carries out the reaction L-glutamine + H2O = L-glutamate + NH4(+). Its pathway is amino-acid biosynthesis; L-arginine biosynthesis; carbamoyl phosphate from bicarbonate: step 1/1. It participates in pyrimidine metabolism; UMP biosynthesis via de novo pathway; (S)-dihydroorotate from bicarbonate: step 1/3. In terms of biological role, small subunit of the glutamine-dependent carbamoyl phosphate synthetase (CPSase). CPSase catalyzes the formation of carbamoyl phosphate from the ammonia moiety of glutamine, carbonate, and phosphate donated by ATP, constituting the first step of 2 biosynthetic pathways, one leading to arginine and/or urea and the other to pyrimidine nucleotides. The small subunit (glutamine amidotransferase) binds and cleaves glutamine to supply the large subunit with the substrate ammonia. This Staphylococcus epidermidis (strain ATCC 35984 / DSM 28319 / BCRC 17069 / CCUG 31568 / BM 3577 / RP62A) protein is Carbamoyl phosphate synthase small chain.